The following is a 156-amino-acid chain: Small ribosomal subunit protein uS7 (156 aa).

This sequence belongs to the universal ribosomal protein uS7 family. As to quaternary structure, part of the 30S ribosomal subunit. Contacts proteins S9 and S11.

One of the primary rRNA binding proteins, it binds directly to 16S rRNA where it nucleates assembly of the head domain of the 30S subunit. Is located at the subunit interface close to the decoding center, probably blocks exit of the E-site tRNA. The polypeptide is Small ribosomal subunit protein uS7 (Arthrobacter sp. (strain FB24)).